A 310-amino-acid chain; its full sequence is Transcription initiation factor IIB (310 aa).

Repeat copies occupy residues Arg-126–Leu-209 and Arg-220–Gln-301.

Belongs to the TFIIB family.

Functionally, stabilizes TBP binding to an archaeal box-A promoter. Also responsible for recruiting RNA polymerase II to the pre-initiation complex (DNA-TBP-TFIIB). This is Transcription initiation factor IIB from Pyrodictium occultum.